The sequence spans 140 residues: ATP synthase epsilon chain (140 aa).

The protein belongs to the ATPase epsilon chain family. In terms of assembly, F-type ATPases have 2 components, CF(1) - the catalytic core - and CF(0) - the membrane proton channel. CF(1) has five subunits: alpha(3), beta(3), gamma(1), delta(1), epsilon(1). CF(0) has three main subunits: a, b and c.

The protein localises to the cell membrane. Produces ATP from ADP in the presence of a proton gradient across the membrane. This Enterococcus hirae (strain ATCC 9790 / DSM 20160 / JCM 8729 / LMG 6399 / NBRC 3181 / NCIMB 6459 / NCDO 1258 / NCTC 12367 / WDCM 00089 / R) protein is ATP synthase epsilon chain (atpC).